The following is a 287-amino-acid chain: Large ribosomal subunit protein uL5m (287 aa).

The transit peptide at 1–18 directs the protein to the mitochondrion; the sequence is MLGIRKNIRISVNFLQRR. Basic and acidic residues predominate over residues 80 to 89; the sequence is DEHTQKDRLP. The disordered stretch occupies residues 80–109; that stretch reads DEHTQKDRLPRWIGDNPYYKNRPPQKMRGN.

It belongs to the universal ribosomal protein uL5 family. As to quaternary structure, component of the mitochondrial large ribosomal subunit (mt-LSU). Mature yeast 74S mitochondrial ribosomes consist of a small (37S) and a large (54S) subunit. The 37S small subunit contains a 15S ribosomal RNA (15S mt-rRNA) and at least 32 different proteins. The 54S large subunit contains a 21S rRNA (21S mt-rRNA) and at least 45 different proteins. Unlike bacterial L5, uL5m does not bind zinc.

It localises to the mitochondrion. In terms of biological role, component of the mitochondrial ribosome (mitoribosome), a dedicated translation machinery responsible for the synthesis of mitochondrial genome-encoded proteins, including at least some of the essential transmembrane subunits of the mitochondrial respiratory chain. The mitoribosomes are attached to the mitochondrial inner membrane and translation products are cotranslationally integrated into the membrane. The sequence is that of Large ribosomal subunit protein uL5m (mrpl7) from Schizosaccharomyces pombe (strain 972 / ATCC 24843) (Fission yeast).